Here is an 85-residue protein sequence, read N- to C-terminus: U4-theraphotoxin-Hhn1a (85 aa).

The N-terminal stretch at 1–22 (MKVTLISILTCAAVLVLHTTAA) is a signal peptide. The propeptide occupies 23–48 (EELEAESQLMEVGMPDTELAAVDEER). 3 cysteine pairs are disulfide-bonded: C52-C66, C56-C77, and C71-C82.

Belongs to the neurotoxin 12 (Hwtx-2) family. 02 (Hwtx-2) subfamily. In terms of assembly, monomer. As to expression, expressed by the venom gland.

The protein resides in the secreted. Its function is as follows. Neurotoxin active on both insects and mammals. The chain is U4-theraphotoxin-Hhn1a from Cyriopagopus hainanus (Chinese bird spider).